The following is a 492-amino-acid chain: Aerolysin (492 aa).

A signal peptide spans 1–21 (MKALKITGLSLIISATLAAQT). Cystine bridges form between Cys42/Cys98 and Cys182/Cys187. The tract at residues 68–84 (WQISGLANNWVILGPGY) is interaction with host N-linked glycan. Residues 256–288 (YGLSEKVSTKNKFKWPLVGETEVSIEIAANQSW) form a part of the transmembrane beta-barrel after proteolytic activation of the toxin and insertion into the host membrane region. The interaction with glycans from host GPI-anchor stretch occupies residues 346–355 (RWGGNAWHTH). Positions 446 to 492 (GSDSKVRRTRSVDGANTGLKLDIPLDAQELAELGFENVTLSVTPARN) are excised as a propeptide.

The protein belongs to the aerolysin family. In terms of assembly, homodimer in solution; homoheptamer in the host membrane. After binding to GPI-anchored proteins in target membranes and proteolytic removal of the C-terminal propeptide, the protein assembles into a heptameric pre-pore complex. A further conformation change leads to insertion into the host membrane. Post-translationally, proteolytic cleavage and subsequent release of the propeptide trigger a major conformation change, leading to the formation of a heptameric pre-pore that then inserts into the host membrane.

The protein resides in the secreted. The protein localises to the host cell membrane. Functionally, secreted, cytolytic toxin that forms pores in host membranes after proteolytic removal of a C-terminal propeptide, leading to destruction of the membrane permeability barrier and cell death. The pores are formed by transmembrane beta-strands and are approximately 3 nm in diameter. This is Aerolysin (aerA) from Aeromonas enteropelogenes (Aeromonas trota).